The primary structure comprises 54 residues: Large ribosomal subunit protein bL33B (54 aa).

It belongs to the bacterial ribosomal protein bL33 family.

This Mycobacterium sp. (strain KMS) protein is Large ribosomal subunit protein bL33B.